A 471-amino-acid polypeptide reads, in one-letter code: Glutamate--tRNA ligase (471 aa).

Residues 9–19 (PSPTGFLHVGG) carry the 'HIGH' region motif. Cys98, Cys100, Cys125, and Asp127 together coordinate Zn(2+). A 'KMSKS' region motif is present at residues 237–241 (KLSKR). Lys240 is an ATP binding site.

Belongs to the class-I aminoacyl-tRNA synthetase family. Glutamate--tRNA ligase type 1 subfamily. Monomer. Requires Zn(2+) as cofactor.

It is found in the cytoplasm. The enzyme catalyses tRNA(Glu) + L-glutamate + ATP = L-glutamyl-tRNA(Glu) + AMP + diphosphate. Its function is as follows. Catalyzes the attachment of glutamate to tRNA(Glu) in a two-step reaction: glutamate is first activated by ATP to form Glu-AMP and then transferred to the acceptor end of tRNA(Glu). The sequence is that of Glutamate--tRNA ligase from Aeromonas hydrophila subsp. hydrophila (strain ATCC 7966 / DSM 30187 / BCRC 13018 / CCUG 14551 / JCM 1027 / KCTC 2358 / NCIMB 9240 / NCTC 8049).